Here is a 391-residue protein sequence, read N- to C-terminus: Glycerol-3-phosphate dehydrogenase [NAD(+)] (391 aa).

NAD(+) is bound by residues 46–51 (GSGNWG), Phe-78, and Phe-134. Substrate is bound at residue Lys-157. Ala-190 is a binding site for NAD(+). The Proton acceptor role is filled by Lys-250. The NAD(+) site is built by Arg-315 and Gln-344. Position 315 to 316 (315 to 316 (RN)) interacts with substrate.

Belongs to the NAD-dependent glycerol-3-phosphate dehydrogenase family.

It catalyses the reaction sn-glycerol 3-phosphate + NAD(+) = dihydroxyacetone phosphate + NADH + H(+). This chain is Glycerol-3-phosphate dehydrogenase [NAD(+)] (GPD), found in Candida tropicalis (Yeast).